The sequence spans 315 residues: Small ribosomal subunit biogenesis GTPase RsgA (315 aa).

The region spanning 82 to 246 (DQFKSKVLAA…LIDSPGFQEF (165 aa)) is the CP-type G domain. Residues 130-133 (NKID) and 184-192 (GQSGMGKSS) contribute to the GTP site. Zn(2+)-binding residues include C270, C275, H277, and C283.

Belongs to the TRAFAC class YlqF/YawG GTPase family. RsgA subfamily. As to quaternary structure, monomer. Associates with 30S ribosomal subunit, binds 16S rRNA. Requires Zn(2+) as cofactor.

It localises to the cytoplasm. Functionally, one of several proteins that assist in the late maturation steps of the functional core of the 30S ribosomal subunit. Helps release RbfA from mature subunits. May play a role in the assembly of ribosomal proteins into the subunit. Circularly permuted GTPase that catalyzes slow GTP hydrolysis, GTPase activity is stimulated by the 30S ribosomal subunit. The chain is Small ribosomal subunit biogenesis GTPase RsgA from Ralstonia pickettii (strain 12J).